The primary structure comprises 565 residues: Arginine--tRNA ligase (565 aa).

The 'HIGH' region signature appears at 120–130; the sequence is PNIAKPFHVGH.

The protein belongs to the class-I aminoacyl-tRNA synthetase family. As to quaternary structure, monomer.

It localises to the cytoplasm. The enzyme catalyses tRNA(Arg) + L-arginine + ATP = L-arginyl-tRNA(Arg) + AMP + diphosphate. This Clostridium perfringens (strain 13 / Type A) protein is Arginine--tRNA ligase.